We begin with the raw amino-acid sequence, 163 residues long: UPF0262 protein RPD_4278 (163 aa).

This sequence belongs to the UPF0262 family.

This is UPF0262 protein RPD_4278 from Rhodopseudomonas palustris (strain BisB5).